A 277-amino-acid chain; its full sequence is Large ribosomal subunit protein uL2 (277 aa).

The tract at residues 223-277 (VAMNPVDHPHGGGEGRTSTGRHPVTPWGKRTLGKKTRKRKASDKYIIRSRRARKR) is disordered. Residues 253-277 (TLGKKTRKRKASDKYIIRSRRARKR) are compositionally biased toward basic residues.

It belongs to the universal ribosomal protein uL2 family. Part of the 50S ribosomal subunit. Forms a bridge to the 30S subunit in the 70S ribosome.

One of the primary rRNA binding proteins. Required for association of the 30S and 50S subunits to form the 70S ribosome, for tRNA binding and peptide bond formation. It has been suggested to have peptidyltransferase activity; this is somewhat controversial. Makes several contacts with the 16S rRNA in the 70S ribosome. The polypeptide is Large ribosomal subunit protein uL2 (Halothermothrix orenii (strain H 168 / OCM 544 / DSM 9562)).